The chain runs to 202 residues: Uclacyanin-2 (202 aa).

Residues 1–29 (MAMNGLSKMAVAAATALLLVLTIVPGAVA) form the signal peptide. Residues 30 to 126 (VTYTIEWTTG…GMKLAVNVVA (97 aa)) form the Phytocyanin domain. A Cu cation-binding site is contributed by histidine 65. Asparagine 86 is a glycosylation site (N-linked (GlcNAc...) asparagine). Cu cation is bound by residues cysteine 106, histidine 111, and methionine 118. The interval 129-181 (AGPPATPTPPSSTPGTPTTPESPPSGGSPTPTTPTPGAGSTSPPPPPKASGAS) is disordered. A compositionally biased stretch (low complexity) spans 141–169 (TPGTPTTPESPPSGGSPTPTTPTPGAGST). The GPI-anchor amidated serine moiety is linked to residue serine 178. Positions 179 to 202 (GASKGVMSYVLVGVSMVLGYGLWM) are cleaved as a propeptide — removed in mature form.

It localises to the cell membrane. Probably acts as an electron carrier involved in oxygen activation and/or lignin formation. The polypeptide is Uclacyanin-2 (Arabidopsis thaliana (Mouse-ear cress)).